Consider the following 330-residue polypeptide: AP-1-like transcription factor YAP3 (330 aa).

Residues 114 to 150 form a disordered region; the sequence is SYSNTNYFSKNNGISPSSRSPSVAHNENVPDDSKAKK. Positions 121-138 are enriched in polar residues; the sequence is FSKNNGISPSSRSPSVAH. Ser-135 carries the post-translational modification Phosphoserine. Residues 144–207 enclose the bZIP domain; that stretch reads DDSKAKKKAQ…TEINAENRLL (64 aa). Positions 147 to 168 are basic motif; sequence KAKKKAQNRAAQKAFRERKEAR. The leucine-zipper stretch occupies residues 172 to 207; the sequence is LQDKLLESERNRQSLLKEIEELRKANTEINAENRLL.

This sequence belongs to the bZIP family. YAP subfamily. In terms of assembly, homodimer. Interacts with the C-terminal, cytoplasmic tail of the multidrug resistance ABC transporter PDR5.

The protein localises to the cytoplasm. Its subcellular location is the nucleus. Its function is as follows. Transcription activator involved in the regulation of genes expressed in response to environmental changes. When overexpressed it activates transcription of the multidrug resistance ABC transporter PDR5, thus conferring resistance to the fungicide fluconazole (FCZ) and cycloheximide. When overexpressed, it also confers, independent of PDR5, increased resistance to 4-nitroquinoline-N-oxide (4-NQO). Preferentially binds 5'-TTACTAA-3'. The sequence is that of AP-1-like transcription factor YAP3 (YAP3) from Saccharomyces cerevisiae (strain ATCC 204508 / S288c) (Baker's yeast).